Here is a 989-residue protein sequence, read N- to C-terminus: E3 ubiquitin-protein ligase Arkadia (989 aa).

Residues Lys19, Lys33, Lys46, Lys58, Lys72, Lys86, Lys95, and Lys109 each participate in a glycyl lysine isopeptide (Lys-Gly) (interchain with G-Cter in SUMO2) cross-link. The disordered stretch occupies residues 63–195 (FSHLCDDSQK…TEADPVPSLL (133 aa)). Positions 65–88 (HLCDDSQKQEKDMTGNQQEQEKSG) are enriched in basic and acidic residues. The segment covering 97-109 (QQAGPSYVQNCVK) has biased composition (polar residues). Residues 110–120 (ENQEILGRRQQ) are compositionally biased toward basic and acidic residues. The span at 131–144 (SSLSECLSSPSSSL) shows a compositional bias: low complexity. Lys172 is covalently cross-linked (Glycyl lysine isopeptide (Lys-Gly) (interchain with G-Cter in SUMO2)). Residues 173-183 (SRSHSARSHKW) show a composition bias toward basic residues. Residues Lys197 and Lys217 each participate in a glycyl lysine isopeptide (Lys-Gly) (interchain with G-Cter in SUMO2) cross-link. The disordered stretch occupies residues 213-293 (KRLVKSSSSQ…PSNPAAPSGS (81 aa)). Residues 240 to 402 (ALAQRKYALL…VPTTSARMDS (163 aa)) are interaction with AXIN1. Low complexity-rich tracts occupy residues 248–270 (LLSS…SSST) and 278–291 (ASAS…AAPS). The short motif at 298-302 (VVVIE) is the SUMO interaction motif 1 (SIM) element. The SUMO interaction motif 2 (SIM) signature appears at 323 to 329 (EVEIVTV). The tract at residues 335-367 (SRSTLGHSRSHWSQGSSSHTGRPQESRNRSRIS) is disordered. Positions 345–355 (HWSQGSSSHTG) are enriched in low complexity. Positions 380 to 384 (VVDLT) match the SUMO interaction motif 3 (SIM) motif. 3 disordered regions span residues 388–475 (DEPT…MPRL), 506–559 (HGHH…YHDQ), and 641–675 (MPPP…PPPQ). Over residues 393–451 (VPTTSARMDSQTTSASINNSNPSTSEQASDTTSTVASSQPSTVSETEATLTSNSATGSS) the composition is skewed to polar residues. Residues 506–520 (HGHHFQHHHHHHHTP) are compositionally biased toward basic residues. Polar residues predominate over residues 548–558 (ANSSSGSSYHD). The ubiquitin binding stretch occupies residues 902-904 (YPH). Glycyl lysine isopeptide (Lys-Gly) (interchain with G-Cter in SUMO2) cross-links involve residues Lys918 and Lys922. Cys937 and Cys940 together coordinate Zn(2+). The RING-type; atypical zinc-finger motif lies at 937–978 (CTICLSILEEGEDVRRLPCMHLFHQVCVDQWLITNKKCPICR). The ubiquitin binding stretch occupies residues 952 to 956 (RLPCM). Residues His960 and Cys963 each contribute to the Zn(2+) site.

Belongs to the Arkadia family. As to quaternary structure, monomer. Interacts with SMAD6, SMAD7, AXIN1, AXIN2 and SKIL isoform SNON. Interacts with (phosphorylated) SMAD2 and SMAD3. Part of a complex containing RNF111, AXIN1 and SMAD7. Interacts (via SIM domains) with SUMO1 and SUMO2. In terms of tissue distribution, ubiquitously expressed.

It is found in the nucleus. The protein localises to the cytoplasm. It localises to the PML body. The enzyme catalyses S-ubiquitinyl-[E2 ubiquitin-conjugating enzyme]-L-cysteine + [acceptor protein]-L-lysine = [E2 ubiquitin-conjugating enzyme]-L-cysteine + N(6)-ubiquitinyl-[acceptor protein]-L-lysine.. Its pathway is protein modification; protein ubiquitination. With respect to regulation, binds free ubiquitin non-covalently via its RING-type zinc finger. Ubiquitin-binding leads to enhance the E3 ubiquitin-protein ligase activity by stabilizing the ubiquitin-conjugating enzyme E2 (donor ubiquitin) in the 'closed' conformation and activating ubiquitin transfer. Its function is as follows. E3 ubiquitin-protein ligase required for mesoderm patterning during embryonic development. Acts as an enhancer of the transcriptional responses of the SMAD2/SMAD3 effectors, which are activated downstream of BMP. Acts by mediating ubiquitination and degradation of SMAD inhibitors such as SMAD7, inducing their proteasomal degradation and thereby enhancing the transcriptional activity of TGF-beta and BMP. In addition to enhance transcription of SMAD2/SMAD3 effectors, also regulates their turnover by mediating their ubiquitination and subsequent degradation, coupling their activation with degradation, thereby ensuring that only effectors 'in use' are degraded. Activates SMAD3/SMAD4-dependent transcription by triggering signal-induced degradation of SNON isoform of SKIL. Associates with UBE2D2 as an E2 enzyme. Specifically binds polysumoylated chains via SUMO interaction motifs (SIMs) and mediates ubiquitination of sumoylated substrates. Catalyzes 'Lys-63'-linked ubiquitination of sumoylated XPC in response to UV irradiation, promoting nucleotide excision repair. Mediates ubiquitination and degradation of sumoylated PML. The regulation of the BMP-SMAD signaling is however independent of sumoylation and is not dependent of SUMO interaction motifs (SIMs). The protein is E3 ubiquitin-protein ligase Arkadia of Mus musculus (Mouse).